The sequence spans 418 residues: Putative ion-transport protein YfeO (418 aa).

11 helical membrane passes run 9–31, 55–77, 90–112, 122–140, 147–169, 189–211, 223–244, 259–281, 301–323, 343–363, and 376–398; these read MLLLSLPAVAIGIASSLILIVVM, SPLWIIGVLTLTGIAVGLVIRFS, LIGAPVPPSALPGLIVALILGLA, PIMTVNIALAVAIGARLLP, WTILASAGTIGALFGTPVAAALI, PLMAAAAGALTTGLFFHPHFSLP, ILSGAIVAAIAIAAGMVAVWCL, LVLGIGGFILGILGVIGGPVSLF, YFLLAVIKLAALVVAAASGFRGG, VPAVPAAITVSCAILGIVLVV, and VVVPNTTLLPLLCIVMLPAWLLL.

This sequence belongs to the chloride channel (TC 2.A.49) family.

It localises to the cell membrane. This chain is Putative ion-transport protein YfeO (yfeO), found in Escherichia coli O157:H7.